A 680-amino-acid polypeptide reads, in one-letter code: DNA-directed RNA polymerase subunit beta' (680 aa).

Positions 69, 71, 87, and 90 each coordinate Zn(2+). Mg(2+) is bound by residues D489, D491, and D493.

Belongs to the RNA polymerase beta' chain family. RpoC1 subfamily. In terms of assembly, in plastids the minimal PEP RNA polymerase catalytic core is composed of four subunits: alpha, beta, beta', and beta''. When a (nuclear-encoded) sigma factor is associated with the core the holoenzyme is formed, which can initiate transcription. Mg(2+) is required as a cofactor. Zn(2+) serves as cofactor.

The protein localises to the plastid. It localises to the chloroplast. It catalyses the reaction RNA(n) + a ribonucleoside 5'-triphosphate = RNA(n+1) + diphosphate. In terms of biological role, DNA-dependent RNA polymerase catalyzes the transcription of DNA into RNA using the four ribonucleoside triphosphates as substrates. The protein is DNA-directed RNA polymerase subunit beta' of Lepidium virginicum (Virginia pepperweed).